Consider the following 170-residue polypeptide: Lipoprotein signal peptidase (170 aa).

3 helical membrane-spanning segments follow: residues 12–32 (WYWV…WVLA), 67–87 (WQRW…TVWL), and 93–113 (GLWR…GNLI). Active-site residues include D123 and D141. The chain crosses the membrane as a helical span at residues 133 to 153 (HFPAFNIADSAICVGAGLIIL).

Belongs to the peptidase A8 family.

Its subcellular location is the cell inner membrane. It catalyses the reaction Release of signal peptides from bacterial membrane prolipoproteins. Hydrolyzes -Xaa-Yaa-Zaa-|-(S,diacylglyceryl)Cys-, in which Xaa is hydrophobic (preferably Leu), and Yaa (Ala or Ser) and Zaa (Gly or Ala) have small, neutral side chains.. Its pathway is protein modification; lipoprotein biosynthesis (signal peptide cleavage). Functionally, this protein specifically catalyzes the removal of signal peptides from prolipoproteins. This is Lipoprotein signal peptidase from Shewanella loihica (strain ATCC BAA-1088 / PV-4).